Consider the following 102-residue polypeptide: Protein isd11 (102 aa).

This sequence belongs to the complex I LYR family.

The protein localises to the mitochondrion. Its function is as follows. Required for mitochondrial iron-sulfur (Fe-S) protein biosynthesis. This Schizosaccharomyces pombe (strain 972 / ATCC 24843) (Fission yeast) protein is Protein isd11 (isd11).